The following is a 412-amino-acid chain: 8-amino-7-oxononanoate synthase (412 aa).

Residue R28 coordinates substrate. 115 to 116 (GY) is a binding site for pyridoxal 5'-phosphate. H140 lines the substrate pocket. Pyridoxal 5'-phosphate-binding residues include S186, H214, and T246. Position 249 is an N6-(pyridoxal phosphate)lysine (K249). T367 contributes to the substrate binding site.

It belongs to the class-II pyridoxal-phosphate-dependent aminotransferase family. BioF subfamily. In terms of assembly, homodimer. It depends on pyridoxal 5'-phosphate as a cofactor.

The enzyme catalyses 6-carboxyhexanoyl-[ACP] + L-alanine + H(+) = (8S)-8-amino-7-oxononanoate + holo-[ACP] + CO2. Its pathway is cofactor biosynthesis; biotin biosynthesis. Functionally, catalyzes the decarboxylative condensation of pimeloyl-[acyl-carrier protein] and L-alanine to produce 8-amino-7-oxononanoate (AON), [acyl-carrier protein], and carbon dioxide. The protein is 8-amino-7-oxononanoate synthase of Paracidovorax citrulli (strain AAC00-1) (Acidovorax citrulli).